The sequence spans 246 residues: Bis(5'-nucleosyl)-tetraphosphatase PrpE [asymmetrical] (246 aa).

This sequence belongs to the PrpE family. Requires Ni(2+) as cofactor.

It catalyses the reaction P(1),P(4)-bis(5'-guanosyl) tetraphosphate + H2O = GMP + GTP + 2 H(+). Asymmetrically hydrolyzes Ap4p to yield AMP and ATP. The polypeptide is Bis(5'-nucleosyl)-tetraphosphatase PrpE [asymmetrical] (Bacillus cereus (strain AH187)).